An 85-amino-acid chain; its full sequence is Large ribosomal subunit protein bL27 (85 aa).

Residues 1–20 (MAHKKAGGSTRNGRDSEAKR) are disordered.

The protein belongs to the bacterial ribosomal protein bL27 family.

The sequence is that of Large ribosomal subunit protein bL27 from Klebsiella pneumoniae (strain 342).